Consider the following 516-residue polypeptide: ADP-ribosylation factor GTPase-activating protein 3 (516 aa).

In terms of domain architecture, Arf-GAP spans 10–126 (LTIFKRLRSV…IKSLASQATR (117 aa)). Residues 25 to 48 (CFDCGAKNPSWASITYGVFLCIDC) form a C4-type zinc finger. The interval 170–199 (AEPSSLTSRPAETTLENNEGGQEQGPCVEG) is disordered. A compositionally biased stretch (polar residues) spans 173-190 (SSLTSRPAETTLENNEGG). A Phosphoserine modification is found at Ser-231. The stretch at 243–264 (NEIEKQAQAADKMKEQEDLAKA) forms a coiled coil. Phosphoserine occurs at positions 270, 274, 331, and 370. Residues 393-417 (TTGYSDRPTARHKPDYEPVENTDEA) are disordered. Phosphoserine occurs at positions 428, 451, 453, 455, 457, and 458.

It is found in the cytoplasm. The protein localises to the golgi apparatus membrane. Its activity is regulated as follows. GAP activity stimulated by phosphatidylinositol 4,5-bisphosphate (PIP2). Functionally, GTPase-activating protein (GAP) for ADP ribosylation factor 1 (ARF1). Hydrolysis of ARF1-bound GTP may lead to dissociation of coatomer from Golgi-derived membranes to allow fusion with target membranes. The chain is ADP-ribosylation factor GTPase-activating protein 3 from Pongo abelii (Sumatran orangutan).